We begin with the raw amino-acid sequence, 374 residues long: 4-hydroxybenzoate polyprenyltransferase, mitochondrial (374 aa).

A mitochondrion-targeting transit peptide spans 1-34 (MLRWGGAGLARGLRAVRSAWLRGPRGLPLALVRS). The Mitochondrial matrix segment spans residues 35–83 (AGVPGARDRRAPAPGTQRGRALSLSAAAVVNSAPRPLQPYLRLMRLDKP). A helical transmembrane segment spans residues 84 to 104 (IGTWLLYLPCTWSIGLAADPG). Over 105 to 108 (CFPD) the chain is Mitochondrial intermembrane. Residues 109–129 (WYMLSLFGTGAILMRGAGCTI) form a helical membrane-spanning segment. The Mitochondrial matrix segment spans residues 130 to 148 (NDMWDRDFDKKVTRTANRP). The chain crosses the membrane as a helical span at residues 149–169 (IAAGDISTFQSFVFLGGQLTL). The Mitochondrial intermembrane portion of the chain corresponds to 170–172 (ALG). The helical transmembrane segment at 173–193 (VLLCLNYYSIAMGAASLLLVV) threads the bilayer. Residues 194–200 (TYPLVKR) lie on the Mitochondrial matrix side of the membrane. A helical transmembrane segment spans residues 201-221 (ITFWPQLALGLTFNWGALLGW). At 222–230 (SAVKGSCDP) the chain is on the mitochondrial intermembrane side. The helical transmembrane segment at 231–251 (AVCLPLYFSGVMWTLIYDTIY) threads the bilayer. Residues 252–277 (AHQDKKDDALIGLKSTALLFQENTRQ) lie on the Mitochondrial matrix side of the membrane. The chain crosses the membrane as a helical span at residues 278 to 298 (WLSGFGVAMVAALSLAGANNG). Over 299-332 (QTVPYYAAVAAVGAHLAHQIYTVDIHRAEDCWDK) the chain is Mitochondrial intermembrane. The helical transmembrane segment at 333-353 (FTSNRTVGMLLFLGIVLGNLC) threads the bilayer. The Mitochondrial matrix portion of the chain corresponds to 354-374 (KEKTEEAKDAEAVRVGSEQTS).

It belongs to the UbiA prenyltransferase family. Requires Mg(2+) as cofactor.

It is found in the mitochondrion inner membrane. It catalyses the reaction an all-trans-polyprenyl diphosphate + 4-hydroxybenzoate = a 4-hydroxy-3-(all-trans-polyprenyl)benzoate + diphosphate. The enzyme catalyses all-trans-decaprenyl diphosphate + 4-hydroxybenzoate = 4-hydroxy-3-(all-trans-decaprenyl)benzoate + diphosphate. It carries out the reaction all-trans-nonaprenyl diphosphate + 4-hydroxybenzoate = 4-hydroxy-3-(all-trans-nonaprenyl)benzoate + diphosphate. It functions in the pathway cofactor biosynthesis; ubiquinone biosynthesis. Mediates the second step in the final reaction sequence of coenzyme Q (CoQ) biosynthesis. Catalyzes the prenylation of para-hydroxybenzoate (PHB) with an all-trans polyprenyl donor (such as all-trans-nonaprenyl diphosphate). The length of the polyprenyl side chain varies depending on the species, in humans, the side chain is comprised of 10 isoprenyls producing CoQ10 (also known as ubiquinone), whereas rodents predominantly generate CoQ9. However, this specificity is not complete, human tissues have low amounts of CoQ9 and rodent organs contain some CoQ10. Plays a central role in the biosynthesis of CoQ9. CoQ9 is a vital molecule that transports electrons from mitochondrial respiratory chain complexes. CoQs also function as cofactors for uncoupling protein and play a role as regulators of the extracellularly-induced ceramide-dependent apoptotic pathway. Regulates mitochondrial permeability transition pore (mPTP) opening and ROS production (pivotal events in cell death) in a tissue specific manner. The chain is 4-hydroxybenzoate polyprenyltransferase, mitochondrial from Mus musculus (Mouse).